A 443-amino-acid chain; its full sequence is MAKYFGTDGIRGEVANSTITVEFTQKLGNAVGSLINQKNYPKFVIVGQDTRSSGGFLKFALVSGLNAAGIDVLDLGVVPTPVVAFMTVKYRAAAGFVITASHNKFTDNGIKLFSSNGFKLDDALEEEVEDMIDGDFIYQPQFKFGSYKILANAIDEYIESIHSRFAKFVNYKGKVVVDCAHGAASHNFEALLDKFGINYVSIASNPDGLNINVGCGATCVSNIKKAVKEQKADLGISLDGDADRIIIVDENGQEIDGDGILNILAQYSDICGGTNGIVGTQMTNMSYENHYRANKIPFIRSKVGDRYVLEDLVKYGYKIGGESSGHVINLNFGTTGDGLFTAIQLLAIFSQADKPVSEFKLQGELMQQTLINVPLTKKVAREDLQKVASDVNDVEKRLGNRGRVLLRPSGTEPVLRVMVEADDKSLATNEAEYLVEKVKQKLV.

The active-site Phosphoserine intermediate is Ser-101. Mg(2+) is bound by residues Ser-101, Asp-239, Asp-241, and Asp-243. The residue at position 101 (Ser-101) is a Phosphoserine.

The protein belongs to the phosphohexose mutase family. Mg(2+) is required as a cofactor. Activated by phosphorylation.

The catalysed reaction is alpha-D-glucosamine 1-phosphate = D-glucosamine 6-phosphate. Catalyzes the conversion of glucosamine-6-phosphate to glucosamine-1-phosphate. The sequence is that of Phosphoglucosamine mutase from Francisella tularensis subsp. tularensis (strain WY96-3418).